We begin with the raw amino-acid sequence, 111 residues long: uncharacterized protein (111 aa).

The segment at Met-1–Leu-85 is disordered. Residues Leu-11–Gln-23 show a composition bias toward polar residues. Residues Ser-24–Ser-42 are compositionally biased toward low complexity. Positions Ala-56 to Ser-77 are enriched in polar residues.

This is an uncharacterized protein from Microplitis demolitor (Parasitoid wasp).